Here is a 557-residue protein sequence, read N- to C-terminus: Carbamoyl phosphate synthase large chain, N-terminal section (557 aa).

The interval 1–402 (MPKRTDIKKI…ALLKAVRSLE (402 aa)) is carboxyphosphate synthetic domain. 12 residues coordinate ATP: Arg129, Arg169, Gly175, Gly176, Lys208, Leu210, Glu215, Gly241, Val242, His243, Gln285, and Glu299. Residues 133 to 328 (KETMESIGLK…IAKVAAKLAV (196 aa)) form the ATP-grasp domain. The Mg(2+) site is built by Gln285, Glu299, and Asn301. Mn(2+) contacts are provided by Gln285, Glu299, and Asn301. The tract at residues 403-553 (LDRYGLAFPK…PYYTVDGQEI (151 aa)) is oligomerization domain.

The protein belongs to the CarB family. Composed of two chains; the small (or glutamine) chain promotes the hydrolysis of glutamine to ammonia, which is used by the large (or ammonia) chain to synthesize carbamoyl phosphate. Tetramer of heterodimers (alpha,beta)4. Requires Mg(2+) as cofactor. Mn(2+) serves as cofactor.

The catalysed reaction is hydrogencarbonate + L-glutamine + 2 ATP + H2O = carbamoyl phosphate + L-glutamate + 2 ADP + phosphate + 2 H(+). The enzyme catalyses hydrogencarbonate + NH4(+) + 2 ATP = carbamoyl phosphate + 2 ADP + phosphate + 2 H(+). The protein operates within amino-acid biosynthesis; L-arginine biosynthesis; carbamoyl phosphate from bicarbonate: step 1/1. Its pathway is pyrimidine metabolism; UMP biosynthesis via de novo pathway; (S)-dihydroorotate from bicarbonate: step 1/3. Large subunit of the glutamine-dependent carbamoyl phosphate synthetase (CPSase). CPSase catalyzes the formation of carbamoyl phosphate from the ammonia moiety of glutamine, carbonate, and phosphate donated by ATP, constituting the first step of 2 biosynthetic pathways, one leading to arginine and/or urea and the other to pyrimidine nucleotides. The large subunit (synthetase) binds the substrates ammonia (free or transferred from glutamine from the small subunit), hydrogencarbonate and ATP and carries out an ATP-coupled ligase reaction, activating hydrogencarbonate by forming carboxy phosphate which reacts with ammonia to form carbamoyl phosphate. This chain is Carbamoyl phosphate synthase large chain, N-terminal section (carB1), found in Aquifex aeolicus (strain VF5).